A 309-amino-acid chain; its full sequence is Probable MRF1 mitochondrial N(5)-glutamine methyltransferase mtq1 (309 aa).

S-adenosyl-L-methionine-binding positions include 124-128 (CTGSG), aspartate 148, and asparagine 200. 200-203 (NPPY) provides a ligand contact to substrate.

The protein belongs to the protein N5-glutamine methyltransferase family.

The protein resides in the mitochondrion. It catalyses the reaction L-glutaminyl-[peptide chain release factor] + S-adenosyl-L-methionine = N(5)-methyl-L-glutaminyl-[peptide chain release factor] + S-adenosyl-L-homocysteine + H(+). Its function is as follows. Methylates MRF1 on 'Gln-270' using S-adenosyl L-methionine as methyl donor. The sequence is that of Probable MRF1 mitochondrial N(5)-glutamine methyltransferase mtq1 (mtq1) from Schizosaccharomyces pombe (strain 972 / ATCC 24843) (Fission yeast).